A 254-amino-acid polypeptide reads, in one-letter code: Hydroxyacylglutathione hydrolase (254 aa).

Zn(2+) contacts are provided by H54, H56, D58, H59, H111, D130, and H168.

The protein belongs to the metallo-beta-lactamase superfamily. Glyoxalase II family. As to quaternary structure, monomer. The cofactor is Zn(2+).

It carries out the reaction an S-(2-hydroxyacyl)glutathione + H2O = a 2-hydroxy carboxylate + glutathione + H(+). The protein operates within secondary metabolite metabolism; methylglyoxal degradation; (R)-lactate from methylglyoxal: step 2/2. Thiolesterase that catalyzes the hydrolysis of S-D-lactoyl-glutathione to form glutathione and D-lactic acid. The sequence is that of Hydroxyacylglutathione hydrolase from Legionella pneumophila (strain Lens).